The following is a 487-amino-acid chain: MTELFIDGAWVDGAGPVFASRNPGTNERVWEGASASADDVERAVASARRAFAAWSALDLDARCTIVKRFAALLVERKEALATMIGRETGKPLWEARTEVASMAAKVDISITAYHERTGEKRAPMADGVAVLRHRPHGVVAVFGPYNFPGHLPNGHIVPALIAGNTVVFKPSELAPGVARATVEIWRDAGLPAGVLNLVQGEKDTGVALANHRQIDGLFFTGSSDTGTLLHKQFGGRPEIVLALEMGGNNPLVVAEVEDIDAAVHHAIQSAFLSAGQRCTCARRILVPRGAFGDRFVARLADVASKITASVFDADPQPFMGAVISARAASRLVAAQARLVGLGASPIIEMKQRDPALGFVNAAILDVTNVRELPDEEHFGPLAQIVRYTDLDDAIARANDTAFGLSAGLLADDEQAWHTFRRAIRAGIVNWNRPTNGASSAAPFGGAGRSGNHRPSAYYAADYCAYPMASVESAQLQMPASLSPGLHF.

221 to 226 is an NAD(+) binding site; it reads GSSDTG. Active-site residues include Glu244 and Cys278.

This sequence belongs to the aldehyde dehydrogenase family. AstD subfamily.

It carries out the reaction N-succinyl-L-glutamate 5-semialdehyde + NAD(+) + H2O = N-succinyl-L-glutamate + NADH + 2 H(+). It functions in the pathway amino-acid degradation; L-arginine degradation via AST pathway; L-glutamate and succinate from L-arginine: step 4/5. Its function is as follows. Catalyzes the NAD-dependent reduction of succinylglutamate semialdehyde into succinylglutamate. This Burkholderia thailandensis (strain ATCC 700388 / DSM 13276 / CCUG 48851 / CIP 106301 / E264) protein is N-succinylglutamate 5-semialdehyde dehydrogenase.